The sequence spans 221 residues: Ras-related protein Rab-28 (221 aa).

S2 is modified (N-acetylserine). S8 carries the post-translational modification Phosphoserine. The GTP site is built by G21, G24, K25, T26, S27, G38, K39, Y41, and T44. T26 contacts Mg(2+). A switch I region spans residues 35 to 49 (ETFGKQYKQTIGLDF). Mg(2+) is bound by residues T44 and D68. Residues 68 to 85 (DIGGQTIGGKMLDKYIYG) are switch II. The GTP site is built by G71, N129, K130, D132, A160, and K161. The residue at position 218 (C218) is a Cysteine methyl ester. Residue C218 is the site of S-farnesyl cysteine attachment. A propeptide spans 219 to 221 (AVQ) (removed in mature form).

The protein belongs to the small GTPase superfamily. Rab family. In terms of assembly, interacts (prenylated form) with PDE6D; the interaction promotes RAB28 delivery to the photoreceptor outer segments. Interacts with KCNJ13; the interaction may facilitate cone outer segments phagocytosis. Interacts with RELA; the interaction contributes to RELA transport from cytoplasm to nucleus. Mg(2+) is required as a cofactor. In terms of processing, isoprenylated. As to expression, testis, brain, and to much lower levels heart, skeletal muscle and fat cells. Expressed in the retina.

It localises to the cell membrane. The protein localises to the cytoplasm. The protein resides in the cytoskeleton. Its subcellular location is the cilium basal body. It is found in the nucleus. It catalyses the reaction GTP + H2O = GDP + phosphate + H(+). With respect to regulation, regulated by guanine nucleotide exchange factors (GEFs) which promote the exchange of bound GDP for free GTP. Regulated by GTPase activating proteins (GAPs) which increase the GTP hydrolysis activity. Inhibited by GDP dissociation inhibitors (GDIs). In terms of biological role, the small GTPases Rab are key regulators of intracellular membrane trafficking, from the formation of transport vesicles to their fusion with membranes. Rabs cycle between an inactive GDP-bound form and an active GTP-bound form that is able to recruit to membranes different sets of downstream effectors directly responsible for vesicle formation, movement, tethering and fusion. RAB28 is required for shedding and phagocytosis of cone cell outer segments (OS) discs in the retina. Also participates in nuclear factor kappa-B p65/RELA nuclear transport in endothelial cells. In Rattus norvegicus (Rat), this protein is Ras-related protein Rab-28.